Reading from the N-terminus, the 652-residue chain is Threonine--tRNA ligase (652 aa).

The 61-residue stretch at methionine 1–threonine 61 folds into the TGS domain. Residues aspartate 243–proline 548 form a catalytic region. Zn(2+) contacts are provided by cysteine 348, histidine 399, and histidine 525.

Belongs to the class-II aminoacyl-tRNA synthetase family. In terms of assembly, homodimer. It depends on Zn(2+) as a cofactor.

Its subcellular location is the cytoplasm. The catalysed reaction is tRNA(Thr) + L-threonine + ATP = L-threonyl-tRNA(Thr) + AMP + diphosphate + H(+). Catalyzes the attachment of threonine to tRNA(Thr) in a two-step reaction: L-threonine is first activated by ATP to form Thr-AMP and then transferred to the acceptor end of tRNA(Thr). Also edits incorrectly charged L-seryl-tRNA(Thr). The chain is Threonine--tRNA ligase from Parvibaculum lavamentivorans (strain DS-1 / DSM 13023 / NCIMB 13966).